Consider the following 459-residue polypeptide: Ribulose bisphosphate carboxylase large chain (459 aa).

Lys-4 carries the N6,N6,N6-trimethyllysine modification. Substrate is bound by residues Asn-113 and Thr-163. The active-site Proton acceptor is Lys-165. Lys-167 serves as a coordination point for substrate. Mg(2+)-binding residues include Lys-191, Asp-193, and Glu-194. The residue at position 191 (Lys-191) is an N6-carboxylysine. His-284 (proton acceptor) is an active-site residue. Residues Arg-285, His-317, and Ser-369 each coordinate substrate.

It belongs to the RuBisCO large chain family. Type I subfamily. In terms of assembly, heterohexadecamer of 8 large chains and 8 small chains; disulfide-linked. The disulfide link is formed within the large subunit homodimers. The cofactor is Mg(2+). In terms of processing, the disulfide bond which can form in the large chain dimeric partners within the hexadecamer appears to be associated with oxidative stress and protein turnover.

It is found in the plastid. The protein resides in the chloroplast. The enzyme catalyses 2 (2R)-3-phosphoglycerate + 2 H(+) = D-ribulose 1,5-bisphosphate + CO2 + H2O. The catalysed reaction is D-ribulose 1,5-bisphosphate + O2 = 2-phosphoglycolate + (2R)-3-phosphoglycerate + 2 H(+). RuBisCO catalyzes two reactions: the carboxylation of D-ribulose 1,5-bisphosphate, the primary event in carbon dioxide fixation, as well as the oxidative fragmentation of the pentose substrate in the photorespiration process. Both reactions occur simultaneously and in competition at the same active site. The sequence is that of Ribulose bisphosphate carboxylase large chain from Nyssa ogeche (Ogeechee tupelo).